Here is a 421-residue protein sequence, read N- to C-terminus: Alpha-1-antiproteinase 2 (421 aa).

Positions 1–24 (MPSSVPWCLLLLAGLCCLVPSSLA) are cleaved as a signal peptide. N-linked (GlcNAc...) asparagine glycans are attached at residues N73, N110, and N274. The RCL stretch occupies residues 376-395 (GTTMWEIMPISLPPDLKFNR).

The protein belongs to the serpin family. N-glycosylated with carbohydrates having biantennary side chains. Plasma.

It localises to the secreted. Inhibitor of serine proteases. The sequence is that of Alpha-1-antiproteinase 2 from Equus caballus (Horse).